Here is a 982-residue protein sequence, read N- to C-terminus: MRLFALLPVLLGLISSHFVSATDNGKTTDVTWDKYSLSVKGERVYVFSGEFHYQRLPVPELWLDVFQKLRANGFNAISIYFFWSFHSASEDTFDFENGAHDVQRVFDYAKQAGLYVIARAGPYCNAETSAGGFALWASNGQMGSTRTSASSYYDRWYPWIQEIGKIIAANQITNGGPVILNQHENELQETIHSADNTVVKYMEQIKAAFSDAGIIVPSTHNEKGMRSMSWSTDYQDVGGAVNIYGLDSYPGGLSCTNPNSGFNLVRTYYQWFQNYSSSQPEYLPEFEGGWFSAWGGSFYDQCSTELSPEFADVYYKNNIGSRVTLHNIYMVMGATSWGQSAAPVVYTSYDYSAPMRETREIRDKLKQTKLIGLFTRVSSGLLQTQMEGNGTGYTSDASIYTWALRNPETHAGFYVLAHSTSSSRAVTTTSLNVNTSAGALTIPNIELAGRQSKIIVTDYQTGDGSSLLYSSAEVLTYATLDVDVIVFYLNIGQKGEFAFKDAPTHLTFKTYGNSKVSSAKSDHGTKYTYCQGDGTTVLKFSHGVLVYLLDKETAWNFFAVPTTSNPRVAPSEQILALGPYLVRTASVSGHTVSLVGDNANATSLEVYTGNSKVTQIKWNGKETPTKKTAYGSLIGSAPGAEHAKLSLPTLKSWKAQDTLPEINPDYDDSRWTVCNKTTSVNSVAPLTLPVLYSGDYGYHAGTKIYRGRFDGVTATGANITVQNGVAAGWAAWLNGVYVGGAIGDPDLAATSAELEFTSSTLRRKDNVLTVVMDYTGHDQANVKPNGSQNPRGILGATLLGGDFTSWRIQGNAGGEANIDPVRGPMNEGGLYGERLGWHLPGYKGSKTATSESPLDGVSGAAGRFYTTTFKLDLDSDLDVPIGLQLGASADAPAVVQIFMNGYQFGHYLPHIGPQTRFPFPPGVINNRGENTLAISLWALTEQGARLSQVDLVAYGAYRTGFNFNHDWSYLQPQWENNRGQYV.

Positions 1–21 (MRLFALLPVLLGLISSHFVSA) are cleaved as a signal peptide. The substrate site is built by Tyr80, Asn125, Ala126, Glu127, and Asn185. Glu186 acts as the Proton donor in catalysis. Substrate is bound at residue Tyr249. Cys255 and Cys302 are disulfide-bonded. N-linked (GlcNAc...) asparagine glycosylation occurs at Asn274. The Nucleophile role is filled by Glu285. Substrate is bound at residue Tyr351. 6 N-linked (GlcNAc...) asparagine glycosylation sites follow: Asn389, Asn434, Asn600, Asn675, Asn718, and Asn785.

It belongs to the glycosyl hydrolase 35 family.

It localises to the secreted. It carries out the reaction Hydrolysis of terminal non-reducing beta-D-galactose residues in beta-D-galactosides.. Its function is as follows. Cleaves beta-linked terminal galactosyl residues from gangliosides, glycoproteins, and glycosaminoglycans. The protein is Probable beta-galactosidase C (lacC) of Penicillium rubens (strain ATCC 28089 / DSM 1075 / NRRL 1951 / Wisconsin 54-1255) (Penicillium chrysogenum).